The chain runs to 251 residues: Ubiquitin-conjugating enzyme E2 6 (251 aa).

The Cytoplasmic segment spans residues 1–229 (MASIQANKRL…DQDKNPGENS (229 aa)). The 150-residue stretch at 5–154 (QANKRLTKEY…YSNFKFKNMF (150 aa)) folds into the UBC core domain. The Glycyl thioester intermediate role is filled by Cys-87. Positions 173–185 (AESKGAQQEENKA) are enriched in basic and acidic residues. The tract at residues 173–200 (AESKGAQQEENKAQKLATEKATSLDDIS) is disordered. Residues 230–250 (NIKSLLCLILAIAIFFVGLIM) form a helical membrane-spanning segment.

The protein belongs to the ubiquitin-conjugating enzyme family.

Its subcellular location is the endoplasmic reticulum membrane. It catalyses the reaction S-ubiquitinyl-[E1 ubiquitin-activating enzyme]-L-cysteine + [E2 ubiquitin-conjugating enzyme]-L-cysteine = [E1 ubiquitin-activating enzyme]-L-cysteine + S-ubiquitinyl-[E2 ubiquitin-conjugating enzyme]-L-cysteine.. It participates in protein modification; protein ubiquitination. Functionally, catalyzes the covalent attachment of ubiquitin to other proteins. Functions in degradation of misfolded or regulated proteins localized in the endoplasmic reticulum (ER) lumen or membrane via the ubiquitin-proteasome system. Cognate E2 conjugating enzyme for the DOA10 ubiquitin ligase complex, which is part of the ERAD-C pathway responsible for the rapid degradation of membrane proteins with misfolded cytoplasmic domains. This is Ubiquitin-conjugating enzyme E2 6 (UBC6) from Kluyveromyces lactis (strain ATCC 8585 / CBS 2359 / DSM 70799 / NBRC 1267 / NRRL Y-1140 / WM37) (Yeast).